We begin with the raw amino-acid sequence, 432 residues long: D-amino acid dehydrogenase (432 aa).

Position 3 to 17 (3 to 17 (VVILGSGVVGVASAW)) interacts with FAD.

Belongs to the DadA oxidoreductase family. FAD is required as a cofactor.

It carries out the reaction a D-alpha-amino acid + A + H2O = a 2-oxocarboxylate + AH2 + NH4(+). It participates in amino-acid degradation; D-alanine degradation; NH(3) and pyruvate from D-alanine: step 1/1. In terms of biological role, oxidative deamination of D-amino acids. The protein is D-amino acid dehydrogenase of Shigella boydii serotype 4 (strain Sb227).